We begin with the raw amino-acid sequence, 379 residues long: AT-rich binding protein (379 aa).

The segment at 29–52 adopts a C2H2-type 1 zinc-finger fold; the sequence is IVCHTCQEELQTQDQFWKHIQDEH. Basic and acidic residues predominate over residues 114 to 124; it reads EQREVELHEAH. Disordered stretches follow at residues 114 to 148 and 221 to 267; these read EQRE…DAAK and PTAS…STTL. Composition is skewed to low complexity over residues 125–143, 223–242, and 249–262; these read QQQQ…QQQQ and ASFV…TTPP. 2 C2H2-type zinc fingers span residues 312-336 and 342-365; these read YICD…RVVH and FNCD…KKKH.

It is found in the nucleus. Its function is as follows. May be a transcription factor for genes having (A+T) stretches in their promoter and/or enhancer regions. Binds to AT rich DNA. The polypeptide is AT-rich binding protein (Drosophila willistoni (Fruit fly)).